A 251-amino-acid chain; its full sequence is Zinc import ATP-binding protein ZnuC (251 aa).

The region spanning 5 to 220 is the ABC transporter domain; it reads VSLENVSVSF…PEFISMFGPR (216 aa). 37-44 serves as a coordination point for ATP; it reads GPNGAGKS.

The protein belongs to the ABC transporter superfamily. Zinc importer (TC 3.A.1.15.5) family. The complex is composed of two ATP-binding proteins (ZnuC), two transmembrane proteins (ZnuB) and a solute-binding protein (ZnuA).

The protein resides in the cell inner membrane. It carries out the reaction Zn(2+)(out) + ATP(in) + H2O(in) = Zn(2+)(in) + ADP(in) + phosphate(in) + H(+)(in). Functionally, part of the ABC transporter complex ZnuABC involved in zinc import. Responsible for energy coupling to the transport system. The sequence is that of Zinc import ATP-binding protein ZnuC from Salmonella typhi.